The chain runs to 85 residues: Large ribosomal subunit protein bL27 (85 aa).

Residues 1-20 (MATKKAGGSTRNGRDSEAKR) form a disordered region.

It belongs to the bacterial ribosomal protein bL27 family.

This Haemophilus influenzae (strain PittEE) protein is Large ribosomal subunit protein bL27.